Here is a 520-residue protein sequence, read N- to C-terminus: Chaperone Ric-8B (520 aa).

Position 468 is a phosphoserine (Ser-468). Residue Thr-473 is modified to Phosphothreonine.

This sequence belongs to the synembryn family. As to quaternary structure, interacts with GDP-bound G(s) G-alpha proteins GNAL and GNAS. Does not interact with G-alpha proteins when they are in complex with subunits beta and gamma.

It is found in the cytoplasm. Its subcellular location is the cell cortex. Functionally, chaperone that specifically binds and folds nascent G(s) G-alpha proteins (GNAS and GNAL) prior to G protein heterotrimer formation, promoting their association with the plasma membrane. Also acts as a guanine nucleotide exchange factor (GEF) for G(s) proteins by stimulating exchange of bound GDP for free GTP. Acts as an important component for odorant signal transduction by mediating GNAL (G(olf)-alpha) folding, thereby promoting-dependent cAMP accumulation in olfactory sensory neurons. The polypeptide is Chaperone Ric-8B (Ric8b) (Rattus norvegicus (Rat)).